The following is a 262-amino-acid chain: Snake venom serine protease catroxase-1 (262 aa).

Residues 1–18 (MVLIRVLANLLILQLSYA) form the signal peptide. Residues 19 to 24 (QKSSEP) constitute a propeptide that is removed on maturation. One can recognise a Peptidase S1 domain in the interval 25-250 (IIGGDECNRN…HLDWIQSIIA (226 aa)). 6 cysteine pairs are disulfide-bonded: cysteine 31/cysteine 162, cysteine 49/cysteine 65, cysteine 97/cysteine 257, cysteine 141/cysteine 211, cysteine 173/cysteine 190, and cysteine 201/cysteine 226. Residue histidine 64 is the Charge relay system of the active site. An N-linked (GlcNAc...) asparagine glycan is attached at asparagine 102. The Charge relay system role is filled by aspartate 109. N-linked (GlcNAc...) asparagine glycosylation is present at asparagine 169. Catalysis depends on serine 205, which acts as the Charge relay system.

It belongs to the peptidase S1 family. Snake venom subfamily. In terms of assembly, monomer. Expressed by the venom gland.

It is found in the secreted. Snake venom serine protease that may act in the hemostasis system of the prey. This is Snake venom serine protease catroxase-1 from Crotalus atrox (Western diamondback rattlesnake).